A 181-amino-acid chain; its full sequence is HGPRTase-like protein 2 (181 aa).

This sequence belongs to the purine/pyrimidine phosphoribosyltransferase family. Archaeal HPRT subfamily.

In terms of biological role, may catalyze a purine salvage reaction, the substrate is unknown. This is HGPRTase-like protein 2 from Haloquadratum walsbyi (strain DSM 16854 / JCM 12705 / C23).